The primary structure comprises 87 residues: Acyl-CoA-binding protein (87 aa).

Serine 2 is modified (N-acetylserine). Residues 2-87 form the ACB domain; it reads SQAEFEKAAE…VEELKQKYGI (86 aa). An N6-acetyllysine; alternate modification is found at lysine 8. Lysine 8 bears the N6-succinyllysine; alternate mark. Lysine 14 lines the an acyl-CoA pocket. Position 17 is an N6-succinyllysine (lysine 17). Lysine 19 is subject to N6-acetyllysine. Tyrosine 29 carries the phosphotyrosine modification. An acyl-CoA contacts are provided by residues 29-33, lysine 51, lysine 55, and tyrosine 74; that span reads YSHYK. An N6-acetyllysine modification is found at lysine 51. Lysine 55 is modified (N6-acetyllysine; alternate). Position 55 is an N6-succinyllysine; alternate (lysine 55). Lysine 55 carries the post-translational modification N6-(2-hydroxyisobutyryl)lysine; alternate. Lysine 55 is subject to N6-malonyllysine; alternate. An N6-acetyllysine; alternate modification is found at lysine 77. Lysine 77 is subject to N6-succinyllysine; alternate.

The protein belongs to the ACBP family. As to quaternary structure, monomer.

It is found in the endoplasmic reticulum. Its subcellular location is the golgi apparatus. Its function is as follows. Binds medium- and long-chain acyl-CoA esters with very high affinity and may function as an intracellular carrier of acyl-CoA esters. It is also able to displace diazepam from the benzodiazepine (BZD) recognition site located on the GABA type A receptor. It is therefore possible that this protein also acts as a neuropeptide to modulate the action of the GABA receptor. The protein is Acyl-CoA-binding protein (DBI) of Oryctolagus cuniculus (Rabbit).